A 436-amino-acid chain; its full sequence is Cyclic GMP-AMP synthase (436 aa).

Residue 112–117 (QGSFQY) participates in GTP binding. Mg(2+) is bound by residues Asp-131 and Asp-133. Residue Arg-182 participates in ATP binding. Asp-193 serves as a coordination point for Mg(2+). Residue Ser-259 coordinates ATP. Residues Lys-287, Ser-301, and Asp-348 each contribute to the GTP site. Disordered regions lie at residues 339 to 358 (RGVE…PSYK) and 417 to 436 (AQEP…MVSG). Polar residues predominate over residues 419–436 (EPSSASKPEKISSTMVSG). A Glycyl lysine isopeptide (Gly-Lys) (interchain with K-? in acceptor proteins) cross-link involves residue Gly-436.

This sequence belongs to the CD-NTase family. A01 subfamily. As to quaternary structure, monomer. Interacts with Cap2 in the presence and absence of phage T2. A Cap2 dimer is bound on either side by a DncV monomer. It depends on Mg(2+) as a cofactor. Post-translationally, in bacteria expressing capV-cdnD-cap2, this protein is conjugated to a number of other proteins (by Cap2 via this protein's C-terminal Gly residue), many of which are involved in metabolism. More conjugated protein is found in the absence of Cap3.

The enzyme catalyses GTP + ATP = 3',3'-cGAMP + 2 diphosphate. Primed for activation by Cap2 which conjugates it to cellular proteins; priming is target protein-specific (green fluorescent protein does not activate the enzyme), but which protein(s) activate is unclear. Enzymatic activity of DncV is inhibited by folate-like molecules, such as 5-methyltetrahydrofolate di-glutamate and 5-methyltetrahydrofolate, suggesting the existence of a signaling pathway that links folate-like metabolism cofactors to the regulation of cyclic dinucleotide second messenger synthesis. Lacks a regulatory loop and is constitutively activated. Its function is as follows. Cyclic nucleotide synthase (second messenger synthase) of a CBASS antivirus system. CBASS (cyclic oligonucleotide-based antiphage signaling system) provides immunity against bacteriophages. The CD-NTase protein (DncV, this protein) synthesizes cyclic nucleotides in response to infection; these serve as specific second messenger signals. The signals activate a diverse range of effectors, leading to bacterial cell death and thus abortive phage infection. A type II-A(GA) CBASS system. Catalyzes the synthesis of 3',3'-cyclic GMP-AMP (cGAMP), a second messenger in cell signal transduction, from GTP and ATP in response to phage infection. Also able to produce c-di-AMP and c-di-GMP from ATP and GTP, respectively; however, cGAMP is the dominant molecule produced by DncV in vivo, contrary to the 2'3'-cGAMP produced by eukaryotes. Is required for efficient V.cholerae intestinal colonization, and down-regulates the colonization-influencing process of chemotaxis. Is not active with dATP, TTP, UTP or CTP. Its product controls the activity of cGAMP-activated phospholipase CapV, a patatin-like lipase that is a direct cGAMP receptor encoded in the dncV operon. In terms of biological role, protects E.coli against phage infection. When the CBASS operon (capV-dncV-cap2-cap3) is introduced in E.coli MG1655 there is about 100-fold protection against phages P1 and T2. When the operon is introduced in E.coli MG1655 there is a more than 10(3) decrease in the efficiency of T2 plaque formation. Protects 100-fold against phage T5, offers no protection against T7. When the operon is introduced in E.coli MG1655 it protects against phages T2, T4, T5 and T6. Another paper shows the operon confers protection against phages P1, T2, T5 and T6 but not T4 or lambda. The polypeptide is Cyclic GMP-AMP synthase (Vibrio cholerae serotype O1 (strain ATCC 39315 / El Tor Inaba N16961)).